The chain runs to 217 residues: Putative thymidylate synthase (217 aa).

Cys-139 is a catalytic residue.

The protein belongs to the thymidylate synthase family. Archaeal-type ThyA subfamily. As to quaternary structure, monomer.

It localises to the cytoplasm. The protein operates within pyrimidine metabolism; dTTP biosynthesis. Functionally, may catalyze the biosynthesis of dTMP using an unknown cosubstrate. The chain is Putative thymidylate synthase from Methanococcoides burtonii (strain DSM 6242 / NBRC 107633 / OCM 468 / ACE-M).